Reading from the N-terminus, the 269-residue chain is Ribonuclease HII (269 aa).

Residues 83-269 (YLIAGVDEVG…HRMSFLTNIL (187 aa)) enclose the RNase H type-2 domain. A divalent metal cation is bound by residues aspartate 89, glutamate 90, and aspartate 185.

It belongs to the RNase HII family. The cofactor is Mn(2+). Mg(2+) is required as a cofactor.

It localises to the cytoplasm. The enzyme catalyses Endonucleolytic cleavage to 5'-phosphomonoester.. Endonuclease that specifically degrades the RNA of RNA-DNA hybrids. The polypeptide is Ribonuclease HII (Clostridium botulinum (strain Langeland / NCTC 10281 / Type F)).